Consider the following 231-residue polypeptide: MKINQVVLIRHGQSEWNTLNKFTGWHDAELDKKGKDEAKFAAILLKKEKFFFDCAHTSLLKRAIHTLQYILDELNQTWLSVKKSWRLNERHYGALEGLNKDEVIEKYGQKQVLLWRRSFDISPPQINIKDKRFPGNDPRYSHLNIHDIPLGESLEKTAKRVIPYWNKIIYPELKNNKKILIVAHGNSLRALIQHLYKIDNKAILDLNIPTAQPIILDFDNEKNPIKWHYLT.

Residues 10–17, 23–24, Arg62, 89–92, Lys100, 116–117, and 185–186 contribute to the substrate site; these read RHGQSEWN, TG, ERHY, RR, and GN. The active-site Tele-phosphohistidine intermediate is the His11. The active-site Proton donor/acceptor is Glu89.

The protein belongs to the phosphoglycerate mutase family. BPG-dependent PGAM subfamily. As to quaternary structure, homodimer.

The enzyme catalyses (2R)-2-phosphoglycerate = (2R)-3-phosphoglycerate. The protein operates within carbohydrate degradation; glycolysis; pyruvate from D-glyceraldehyde 3-phosphate: step 3/5. In terms of biological role, catalyzes the interconversion of 2-phosphoglycerate and 3-phosphoglycerate. In Buchnera aphidicola subsp. Acyrthosiphon pisum (strain 5A), this protein is 2,3-bisphosphoglycerate-dependent phosphoglycerate mutase.